Consider the following 140-residue polypeptide: Coiled-coil domain-containing protein 126 (140 aa).

The first 26 residues, 1–26, serve as a signal peptide directing secretion; that stretch reads MFFTISRKNMSQKLSLLLLVFGLIWG. N-linked (GlcNAc...) asparagine glycosylation is found at asparagine 110 and asparagine 134. The tract at residues 120-140 is disordered; sequence TSGNLVPVTTNKRTNVSGSIR.

The protein localises to the secreted. This is Coiled-coil domain-containing protein 126 (CCDC126) from Homo sapiens (Human).